A 199-amino-acid chain; its full sequence is BREX protein BrxA (199 aa).

Belongs to the BrxA family.

Its function is as follows. BREX systems (bacteriophage exclusion) provide immunity against bacteriophage. Part of a type 1 BREX system which protects against dsDNA phage. This system allows phage adsorption but prevents phage DNA replication, without degradation of the phage DNA. Methylation of bacterial DNA by PglX guides self/non-self discrimination. This Paramagnetospirillum magneticum (strain ATCC 700264 / AMB-1) (Magnetospirillum magneticum) protein is BREX protein BrxA.